Here is a 372-residue protein sequence, read N- to C-terminus: NAD(P)H-quinone oxidoreductase subunit 1 (372 aa).

A run of 8 helical transmembrane segments spans residues 27–47 (AVWM…GVLI), 97–117 (ALFT…YLIV), 128–148 (LGIG…GLLM), 166–186 (AAQS…IAMM), 204–224 (ILGW…IAAL), 254–274 (FALF…MVAI), 308–328 (AVGI…AILL), and 351–371 (VGLV…IAFG).

This sequence belongs to the complex I subunit 1 family. As to quaternary structure, NDH-1 is composed of at least 11 different subunits.

The protein localises to the cellular thylakoid membrane. It carries out the reaction a plastoquinone + NADH + (n+1) H(+)(in) = a plastoquinol + NAD(+) + n H(+)(out). It catalyses the reaction a plastoquinone + NADPH + (n+1) H(+)(in) = a plastoquinol + NADP(+) + n H(+)(out). Functionally, NDH-1 shuttles electrons from an unknown electron donor, via FMN and iron-sulfur (Fe-S) centers, to quinones in the respiratory and/or the photosynthetic chain. The immediate electron acceptor for the enzyme in this species is believed to be plastoquinone. Couples the redox reaction to proton translocation, and thus conserves the redox energy in a proton gradient. This is NAD(P)H-quinone oxidoreductase subunit 1 from Cyanothece sp. (strain PCC 7425 / ATCC 29141).